The sequence spans 37 residues: Cytochrome b6-f complex subunit 5 (37 aa).

Residues 5-25 form a helical membrane-spanning segment; the sequence is LLCGIVLGLIPITLMGLFVAA.

It belongs to the PetG family. In terms of assembly, the 4 large subunits of the cytochrome b6-f complex are cytochrome b6, subunit IV (17 kDa polypeptide, PetD), cytochrome f and the Rieske protein, while the 4 small subunits are PetG, PetL, PetM and PetN. The complex functions as a dimer.

It is found in the cellular thylakoid membrane. Component of the cytochrome b6-f complex, which mediates electron transfer between photosystem II (PSII) and photosystem I (PSI), cyclic electron flow around PSI, and state transitions. PetG is required for either the stability or assembly of the cytochrome b6-f complex. The chain is Cytochrome b6-f complex subunit 5 from Synechococcus sp. (strain CC9311).